Here is a 239-residue protein sequence, read N- to C-terminus: Transcriptional activatory protein AadR (239 aa).

Position 27 to 149 (27 to 149 (ICGELGPADH…FATRELSLAQ (123 aa))) interacts with a nucleoside 3',5'-cyclic phosphate. One can recognise an HTH crp-type domain in the interval 158 to 231 (RSAEEKVAAF…PDGVRVLDPK (74 aa)). Residues 191–210 (RQDIADFLGLTIETVSRTFT) constitute a DNA-binding region (H-T-H motif).

Its function is as follows. Transcriptional activator of anaerobic gene expression. For aromatic acid degradation. Also required for the anaerobic degradation of benzoate. The protein is Transcriptional activatory protein AadR (aadR) of Rhodopseudomonas palustris (strain ATCC BAA-98 / CGA009).